Here is a 306-residue protein sequence, read N- to C-terminus: Heterogeneous nuclear ribonucleoproteins C1/C2 (306 aa).

Alanine 2 carries the post-translational modification N-acetylalanine. Glycyl lysine isopeptide (Lys-Gly) (interchain with G-Cter in SUMO2) cross-links involve residues lysine 8, lysine 50, lysine 89, and lysine 94. Positions 16 to 87 (SRVFIGNLNT…QVLDINLAAE (72 aa)) constitute an RRM domain. Serine 107 and valine 108 each carry phosphoserine. Threonine 109 is modified (phosphothreonine). 3 positions are modified to phosphoserine: serine 113, serine 115, and serine 121. 2 disordered regions span residues 139-190 (YPAR…KLKG) and 221-306 (QSKQ…EDDS). The Nuclear localization signal signature appears at 155 to 161 (PSKRQRV). Phosphoserine occurs at positions 162 and 166. Low complexity predominate over residues 175–185 (SKSGQRGSSKS). Position 176 is an N6-acetyllysine; alternate (lysine 176). Lysine 176 participates in a covalent cross-link: Glycyl lysine isopeptide (Lys-Gly) (interchain with G-Cter in SUMO2); alternate. The stretch at 190-238 (GDDLQAIKKELTQIKQKVDSLLENLEKIEKEQSKQAVEMKNDKSEEEQS) forms a coiled coil. Residues 221 to 232 (QSKQAVEMKNDK) are compositionally biased toward basic and acidic residues. Residues lysine 223 and lysine 229 each participate in a glycyl lysine isopeptide (Lys-Gly) (interchain with G-Cter in SUMO2) cross-link. Residue lysine 232 forms a Glycyl lysine isopeptide (Lys-Gly) (interchain with G-Cter in SUMO2); alternate linkage. A Glycyl lysine isopeptide (Lys-Gly) (interchain with G-Cter in SUMO1); alternate cross-link involves residue lysine 232. 4 positions are modified to phosphoserine: serine 233, serine 238, serine 239, and serine 241. A compositionally biased stretch (basic and acidic residues) spans 242–253 (VKKDETNVKMES). Residues lysine 243 and lysine 244 each participate in a glycyl lysine isopeptide (Lys-Gly) (interchain with G-Cter in SUMO2) cross-link. A Glycyl lysine isopeptide (Lys-Gly) (interchain with G-Cter in SUMO2); alternate cross-link involves residue lysine 250. Residue lysine 250 forms a Glycyl lysine isopeptide (Lys-Gly) (interchain with G-Cter in SUMO); alternate linkage. Phosphoserine is present on residues serine 253 and serine 260. Residues 255-276 (GGADDSAEEGDLLDDDDNEDRG) are compositionally biased toward acidic residues. The segment covering 277-287 (DDQLELIKDDE) has biased composition (basic and acidic residues). The segment covering 288-306 (KEAEEGEDDRDSANGEDDS) has biased composition (acidic residues). Phosphoserine occurs at positions 299 and 306.

It belongs to the RRM HNRPC family. RALY subfamily. As to quaternary structure, tetramer composed of 3 copies of isoform C1 and 1 copy of isoform C2. Assembly of 3 tetramers with bound pre-mRNA gives rise to a 19S complex that interacts with HNRNPA2B1 tetramers. Component of the 40S hnRNP particle. Identified in the spliceosome C complex. Interacts with IGF2BP1. Interacts with DHX9; this interaction is direct, enhanced probably by their concomitant binding to RNA and mediates the attachment to actin filaments. Interacts with PPIA/CYPA. Interacts with YWHAE. In terms of processing, phosphorylated on Ser-260 and Ser-299 in resting cells. Phosphorylated on Ser-253 and on 1 serine residue in the poly-Ser stretch at position 238 in response to hydrogen peroxide. Sumoylated. Sumoylation reduces affinity for mRNA. Post-translationally, ubiquitinated and degraded after nucleo-cytoplasmic transport by YWHAE.

It localises to the nucleus. Its function is as follows. Binds pre-mRNA and nucleates the assembly of 40S hnRNP particles. Interacts with poly-U tracts in the 3'-UTR or 5'-UTR of mRNA and modulates the stability and the level of translation of bound mRNA molecules. Single HNRNPC tetramers bind 230-240 nucleotides. Trimers of HNRNPC tetramers bind 700 nucleotides. May play a role in the early steps of spliceosome assembly and pre-mRNA splicing. N6-methyladenosine (m6A) has been shown to alter the local structure in mRNAs and long non-coding RNAs (lncRNAs) via a mechanism named 'm(6)A-switch', facilitating binding of HNRNPC, leading to regulation of mRNA splicing. The protein is Heterogeneous nuclear ribonucleoproteins C1/C2 (HNRNPC) of Homo sapiens (Human).